The chain runs to 339 residues: MTPPPIRFGYKASAEQFGPSELADLAVAAEEHGFDSVFISDHLQPWRHDGGHAPASLPWLGAVGARTQRVILGTSVLTPTIRYHPGVIAQAFATLGSMYPGRIVLGVGTGESLNEVPLGLAWPEQKERFARLKESVNLIHELWTGERVTFEGEYYRTDKATIYDRPADPVPIYIGASGPAATRLAGRIADGFITTSGKAPSLYTDTLLPALRDGVEKAGRRLDELDTLMEMKVSFDTDRERAMQDTRFWAALALKPEQKAGVEDPLEMQRLADELPIEQAASRWIVSDDPDEHVEKIRTYLDLGFRHLVFHAPGHDQQRFLALYGEQILPRLRALVGQG.

D41 is a coenzyme F420-(gamma-Glu)n binding site. Catalysis depends on H42, which acts as the Proton donor. Residues T78 and 109–110 contribute to the coenzyme F420-(gamma-Glu)n site; that span reads TG. E111 functions as the Proton acceptor in the catalytic mechanism. Coenzyme F420-(gamma-Glu)n-binding positions include N114, 177 to 178, and 180 to 181; these read SG and AA. Residues T195, K198, K259, and R283 each contribute to the substrate site.

Belongs to the F420-dependent glucose-6-phosphate dehydrogenase family. As to quaternary structure, homodimer.

The catalysed reaction is oxidized coenzyme F420-(gamma-L-Glu)(n) + D-glucose 6-phosphate + H(+) = 6-phospho-D-glucono-1,5-lactone + reduced coenzyme F420-(gamma-L-Glu)(n). Catalyzes the coenzyme F420-dependent oxidation of glucose 6-phosphate (G6P) to 6-phosphogluconolactone. In Nakamurella multipartita (strain ATCC 700099 / DSM 44233 / CIP 104796 / JCM 9543 / NBRC 105858 / Y-104) (Microsphaera multipartita), this protein is F420-dependent glucose-6-phosphate dehydrogenase.